We begin with the raw amino-acid sequence, 296 residues long: Enoyl-CoA hydratase domain-containing protein 2, mitochondrial (296 aa).

An N6-acetyllysine; alternate modification is found at Lys-101. An N6-succinyllysine; alternate modification is found at Lys-101.

This sequence belongs to the enoyl-CoA hydratase/isomerase family.

It is found in the mitochondrion. The sequence is that of Enoyl-CoA hydratase domain-containing protein 2, mitochondrial (ECHDC2) from Bos taurus (Bovine).